The primary structure comprises 320 residues: Nucleoporin Nup37 (320 aa).

WD repeat units lie at residues 67-113, 118-157, 160-200, and 203-242; these read KEQR…FTSL, GHGD…ENVI, GLSS…TVIS, and SPKF…VPAD.

Its subcellular location is the nucleus. It localises to the nuclear pore complex. In terms of biological role, as part of the nuclear pore complex (NPC), has a role in its assembly and function. Functionally, (Microbial infection) Required for optimal replication of E.chaffeensis. This is Nucleoporin Nup37 from Drosophila melanogaster (Fruit fly).